We begin with the raw amino-acid sequence, 61 residues long: Small ribosomal subunit protein uS14 (61 aa).

Cys24, Cys27, Cys40, and Cys43 together coordinate Zn(2+).

It belongs to the universal ribosomal protein uS14 family. Zinc-binding uS14 subfamily. Part of the 30S ribosomal subunit. Contacts proteins S3 and S10. Requires Zn(2+) as cofactor.

Binds 16S rRNA, required for the assembly of 30S particles and may also be responsible for determining the conformation of the 16S rRNA at the A site. The protein is Small ribosomal subunit protein uS14 of Borrelia garinii subsp. bavariensis (strain ATCC BAA-2496 / DSM 23469 / PBi) (Borreliella bavariensis).